The following is a 758-amino-acid chain: MAAPTPSNRIEERSGHASCVRADADLPPVAILGRSPITLRHKIFFVAVAVIGALAWTVVAFFRNEPVNAVWIVVAAGCTYIIGFRFYARLIEMKVVRPRDDHATPAEILDDGTDYVPTDRRVVFGHHFAAIAGAGPLVGPVLATQMGYLPSSIWIVVGAVLAGCVQDYLVLWISVRRRGRSLGQMVRDELGATAGVAALVGIPVIITIVIAVLALVVVRALAKSPWGVFSIAMTIPIAIFMGCYLRFLRPGRVSEVSLIGIGLLLLAVVSGDWVAHTSWGAAWFSLSPVTLCWLLISYGFAASVLPVWLLLAPRDYLSTFMKVGTIALLAIGVCAAHPIIEAPAVSKFAGSGNGPVFAGSLFPFLFITIACGALSGFDALICSGTTPKMLEKEGQMRVIGYGGMMTESFVAVIALLTAAILDQHLYFTLNAPSLHTHDSAATAAKYVNGLGLTGSPVTPDHISQAAASVGEQTIVSRTGGAPTLAFGMAEMLHRVVGGVGLKAFWYHFAIMFEALFILTTVDAGTRAARFMISDALGNFGGVLRKLQNPSWRPGAWACSLVVVAAWGSILLLGVTDPLGGINTLFPLFGIANQLLAGIALTVITVVVIKKGRLKWAWIPGIPLLWDLAVTLTASWQKIFSADPSVGYWTQHAHYAAAQHAGETAFGSATNADEINDVVRNTFVQGTLSIVFVVVVVLVVVAGVIVALKTIRGRGIPLAEDDPAPSTLFAPAGLIPTAAERKLQRRLGAPASASVAAPD.

16 helical membrane passes run 42–62 (KIFF…VAFF), 67–87 (VNAV…FRFY), 122–142 (VVFG…GPVL), 153–173 (IWIV…VLWI), 198–218 (ALVG…LVVV), 225–245 (PWGV…GCYL), 256–276 (VSLI…WVAH), 291–311 (LCWL…WLLL), 320–340 (FMKV…HPII), 361–381 (LFPF…DALI), 401–421 (YGGM…AAIL), 498–518 (GVGL…LFIL), 561–581 (VVVA…LGGI), 588–608 (FGIA…VVVI), 615–635 (WAWI…TASW), and 687–707 (LSIV…IVAL).

This sequence belongs to the peptide transporter carbon starvation (CstA) (TC 2.A.114) family.

The protein resides in the cell membrane. Its function is as follows. Involved in peptide utilization. This is Peptide transporter CstA (cstA) from Mycobacterium tuberculosis (strain CDC 1551 / Oshkosh).